Here is a 341-residue protein sequence, read N- to C-terminus: Dimethylsulfoniopropionate lyase 7 (341 aa).

Composition is skewed to basic and acidic residues over residues 1–10 (MAGKDRKTIE) and 319–328 (ERKLAKDRQK). Disordered stretches follow at residues 1 to 24 (MAGK…GGRF) and 319 to 341 (ERKL…AFDA).

The protein belongs to the aspartate/glutamate racemases family. ALMA1 subfamily. Homotetramer.

It catalyses the reaction S,S-dimethyl-beta-propiothetin = acrylate + dimethyl sulfide + H(+). In terms of biological role, mediates cleavage of dimethylsulfoniopropionate (DMSP) into dimethyl sulfide (DMS) and acrylate. DMS is the principal form by which sulfur is transported from oceans to the atmosphere and is a key component of the ocean sulfur cycle. This chain is Dimethylsulfoniopropionate lyase 7, found in Emiliania huxleyi (strain CCMP1516).